The primary structure comprises 126 residues: Small ribosomal subunit protein uS13c (126 aa).

Residues 95–126 (GLPLRGQNTRTNARTKRGIKKTMAGKKKAPRK) are disordered. Over residues 107-126 (ARTKRGIKKTMAGKKKAPRK) the composition is skewed to basic residues.

The protein belongs to the universal ribosomal protein uS13 family. In terms of assembly, part of the 30S ribosomal subunit.

The protein localises to the plastid. Its subcellular location is the chloroplast. Functionally, located at the top of the head of the 30S subunit, it contacts several helices of the 16S rRNA. This chain is Small ribosomal subunit protein uS13c, found in Gracilaria tenuistipitata var. liui (Red alga).